Consider the following 402-residue polypeptide: MDQPAPAPEPMLLDAQPPAAVACDKKQQEGEAPYAEGNDAVTGHIISTTIGGKNGEPKRTISYMAERVVGTGSFGIVFQAKCLETGETVAIKKVLQDRRYKNRELQLMRAMDHPNVISLKHCFFSTTSRDELFLNLVMEYVPETLYRVLKHYSNANHRMPLIYVKLYMYQLFRGLAYIHTVPGVCHRDVKPQNVLVDPLTHQVKLCDFGSAKTLVPGEPNISYICSRYYRAPELIFGATEYTTSIDIWSAGCVLAELLLGQPLFPGESAVDQLVEIIKVLGTPTREEIRCMNPNYTEFRFPQIKAHPWHKVFHKRMPPEAIDLASRLLQYSPSLRCTALDACAHPFFDELREPNARLPNGRPFPPLFNFKHELANSSQELISRLIPEHVRRQATHNFFNTGS.

The disordered stretch occupies residues 1 to 38 (MDQPAPAPEPMLLDAQPPAAVACDKKQQEGEAPYAEGN). Positions 63 to 347 (YMAERVVGTG…ALDACAHPFF (285 aa)) constitute a Protein kinase domain. ATP-binding positions include 69-77 (VGTGSFGIV) and Lys-92. Asp-188 (proton acceptor) is an active-site residue.

Belongs to the protein kinase superfamily. CMGC Ser/Thr protein kinase family. GSK-3 subfamily. As to quaternary structure, interacts with DLT. Interacts with OFP8. Interacts with GRF4. Interacts with PUB24. Interacts with SMOS1. Autophosphorylated. Expressed in lamina joints, vascular tissue and nodes.

It is found in the cytoplasm. The protein resides in the nucleus. It catalyses the reaction L-seryl-[protein] + ATP = O-phospho-L-seryl-[protein] + ADP + H(+). The enzyme catalyses L-threonyl-[protein] + ATP = O-phospho-L-threonyl-[protein] + ADP + H(+). In terms of biological role, serine-threonine kinase that acts as a negative regulator of brassinosteroid (BR) signaling. Phosphorylates DLT and BZR1, two positive regulators that mediates several BR responses. Phosphorylation of DLT and BZR1 inhibits their activities in BR signaling. Phosphorylates OFP8, a positive regulator of BR responses. Phosphorylated OFP8 shuttles from the nucleus to the cytoplasm where it is degraded by the proteasome. Phosphorylates the E3 ubiquitin-protein ligase PUB24, a negative regulator of BR signaling, which targets BZR1 and promotes its degradation via the 26S proteasome. Phosphorylation of PUB24 increases its stability. Phosphorylates the AP2-ERF transcription factor SMOS1, a positive regulator of BR signaling, which cooperatively functions in a transactivating complex with BZR1 to enhance the transcription of BR biosynthetic genes. Phosphorylation of SMOS1 leads to its degradation by an unknown mechanism. The chain is Shaggy-related protein kinase GSK2 from Oryza sativa subsp. japonica (Rice).